The sequence spans 217 residues: GTP cyclohydrolase 1 (217 aa).

Residues Cys-109, His-112, and Cys-180 each contribute to the Zn(2+) site.

It belongs to the GTP cyclohydrolase I family. In terms of assembly, toroid-shaped homodecamer, composed of two pentamers of five dimers.

It catalyses the reaction GTP + H2O = 7,8-dihydroneopterin 3'-triphosphate + formate + H(+). Its pathway is cofactor biosynthesis; 7,8-dihydroneopterin triphosphate biosynthesis; 7,8-dihydroneopterin triphosphate from GTP: step 1/1. This is GTP cyclohydrolase 1 from Aliivibrio fischeri (strain ATCC 700601 / ES114) (Vibrio fischeri).